Consider the following 207-residue polypeptide: MILVLCFILAYFIGAIPFGVVIGKLFYHTDIRKGGSHNIGTTNAYRMLGPVGGSIVLVLDILKGTLAASLPILFGIEHHWLVLIVGLAAVFGHTFSIYIRFKGGKAVATSAGILLAYNPPFFVIAFAIWFSLILLTSMVSVASTLGMVLITAWSLVYHDWLLTTVACGLLVVFLIKHRANFKRIKAGDENMVPFGLGQYLRQHRGRS.

5 helical membrane passes run 2–22 (ILVL…GVVI), 47–67 (MLGP…GTLA), 72–92 (ILFG…AVFG), 121–141 (FFVI…MVSV), and 155–175 (LVYH…VFLI).

The protein belongs to the PlsY family. As to quaternary structure, probably interacts with PlsX.

The protein localises to the cell membrane. It catalyses the reaction an acyl phosphate + sn-glycerol 3-phosphate = a 1-acyl-sn-glycero-3-phosphate + phosphate. It participates in lipid metabolism; phospholipid metabolism. In terms of biological role, catalyzes the transfer of an acyl group from acyl-phosphate (acyl-PO(4)) to glycerol-3-phosphate (G3P) to form lysophosphatidic acid (LPA). This enzyme utilizes acyl-phosphate as fatty acyl donor, but not acyl-CoA or acyl-ACP. In Lacticaseibacillus casei (strain BL23) (Lactobacillus casei), this protein is Glycerol-3-phosphate acyltransferase.